The sequence spans 336 residues: Holliday junction branch migration complex subunit RuvB (336 aa).

The interval 1–182 is large ATPase domain (RuvB-L); it reads MKERIVNLET…FGMSFRMQFY (182 aa). Residues Leu21, Arg22, Gly63, Lys66, Thr67, Ser68, 129–131, Arg172, Tyr182, and Arg219 contribute to the ATP site; that span reads EDF. Mg(2+) is bound at residue Thr67. Positions 183-253 are small ATPAse domain (RuvB-S); it reads SPSELALIIK…ITLHALNELG (71 aa). The head domain (RuvB-H) stretch occupies residues 256-336; the sequence is ELGFDEADLA…IPTLKSQTLF (81 aa). Positions 310 and 315 each coordinate DNA.

Belongs to the RuvB family. Homohexamer. Forms an RuvA(8)-RuvB(12)-Holliday junction (HJ) complex. HJ DNA is sandwiched between 2 RuvA tetramers; dsDNA enters through RuvA and exits via RuvB. An RuvB hexamer assembles on each DNA strand where it exits the tetramer. Each RuvB hexamer is contacted by two RuvA subunits (via domain III) on 2 adjacent RuvB subunits; this complex drives branch migration. In the full resolvosome a probable DNA-RuvA(4)-RuvB(12)-RuvC(2) complex forms which resolves the HJ.

The protein localises to the cytoplasm. It carries out the reaction ATP + H2O = ADP + phosphate + H(+). The RuvA-RuvB-RuvC complex processes Holliday junction (HJ) DNA during genetic recombination and DNA repair, while the RuvA-RuvB complex plays an important role in the rescue of blocked DNA replication forks via replication fork reversal (RFR). RuvA specifically binds to HJ cruciform DNA, conferring on it an open structure. The RuvB hexamer acts as an ATP-dependent pump, pulling dsDNA into and through the RuvAB complex. RuvB forms 2 homohexamers on either side of HJ DNA bound by 1 or 2 RuvA tetramers; 4 subunits per hexamer contact DNA at a time. Coordinated motions by a converter formed by DNA-disengaged RuvB subunits stimulates ATP hydrolysis and nucleotide exchange. Immobilization of the converter enables RuvB to convert the ATP-contained energy into a lever motion, pulling 2 nucleotides of DNA out of the RuvA tetramer per ATP hydrolyzed, thus driving DNA branch migration. The RuvB motors rotate together with the DNA substrate, which together with the progressing nucleotide cycle form the mechanistic basis for DNA recombination by continuous HJ branch migration. Branch migration allows RuvC to scan DNA until it finds its consensus sequence, where it cleaves and resolves cruciform DNA. This is Holliday junction branch migration complex subunit RuvB from Helicobacter pylori (strain G27).